The primary structure comprises 1400 residues: MNQEVMNLFNQQAQPQSFDQIKISISSPEKILSWSYGEIKKPETINYRTFKPERDGLFCARIFGPIKDYECLCGKYKRMKYKGVICEKCGVEVTLARVRRDRMGHIELAAPVAHIWFLKSLPSRIGLLLDMALKDLERILYFESYVVIEPGLTPLKERQLLSEEEYLRAQEEYGEDSFTAMIGAEAIRRILQDLNLEKIAADLRQEIATTTSDLKPKKLLKRLKIIEAFQLSGNKPEWMILTVVPVIPPDLRPLVPLDGGRFATSDLNDLYRRVINRNNRLKRLIELRAPDIIIRNEKRMLQEAVDALFDNGRRGRVITGANKRPLKSLADMLKGKQGRFRQNLLGKRVDYSGRSVIVVGPELKLHQCGLPKKMALELFKPFIYARLDAKGFSATVKQAKKLVEKEKPEVWDILDEVIREHPVMLNRAPTLHRLGIQAFEPKLIEGKAIQLHPLVCAAFNADFDGDQMAVHVPLSLEAQLEARVLMMSTNNILHPANGAPIIVPSQDIVLGLYYLSIVADGAPGEYKSNNPLNPMQGVYGDFGELEHALASRAVTLHSKVKWRWKGLGPDGEEVTRTYDTTPGRVILSSVLPRHPKVPFDVVNKLMTKKEISAMIDTVYRHCGQKESVIFCDRIMGLGFSHAFKAGISFGKDDMVVPENKWTIVDETRALVKDYEQQYQDGLITQGEKYNKVVDAWAKCSDRLASEMMNRISSVQKDEKGADKQVNSIYMMSHSGARGSPAQMKQLAAMRGLMAKPSGEIIESPIISNFKEGLDVLEYFNSTHGARKGLADTALKTANSGYLTRRLVDVAQDAVIREVDCGTDAGIRMRAIIDAGQVVATLATRILGRATAEDLVAQDGSIIVPKGQMIEERHLDAINKAGIQEVKIRSVLVCATKNGVCATCYGRDLARGTPVNQGEAVGVIAAQSIGEPGTQLTMRTFHIGGAAQIADSSFIESSFEGTVRIRNRGLARNSDGDLIAIGRNVAVVIVGPDGTERAVHRLQYGARVRVDEGDSIKRGQRIAEWDPYTRPILTEVDGIVAYEDLIDGQSITETTDESTGIAKRVVIDWRGSARTADLRPALAIHDQNGKVLKLPRGSDARALLPVEAIIGVDPGARVKAGDILARVSTESAKTRDITGGLPRVAELFEARRPKDAAIIAEKSGTISFGRDYKNKRRLSLTPHDGSEPVEYLIPKGKHIHLQDGDVVEVGDFIVDGNPAPHDILAIKGVEELAAYLVNEIQEVYRLQGVSINDKHIEVIVRQMLQKVEITDSGDSEILTGDQIDRTELQEINEQLVSEGKKPVQGVPVLLGITKASLQTRSFISAASFQETTRVLTEAAVNGKVDTLEGLKENVIVGSLIPAGTGAMIADIKSIARRRDELIMAQKTAESGAALQELPAAE.

Residues C71, C73, C86, and C89 each contribute to the Zn(2+) site. Mg(2+) contacts are provided by D462, D464, and D466. C820, C893, C900, and C903 together coordinate Zn(2+).

The protein belongs to the RNA polymerase beta' chain family. As to quaternary structure, the RNAP catalytic core consists of 2 alpha, 1 beta, 1 beta' and 1 omega subunit. When a sigma factor is associated with the core the holoenzyme is formed, which can initiate transcription. The cofactor is Mg(2+). It depends on Zn(2+) as a cofactor.

The catalysed reaction is RNA(n) + a ribonucleoside 5'-triphosphate = RNA(n+1) + diphosphate. DNA-dependent RNA polymerase catalyzes the transcription of DNA into RNA using the four ribonucleoside triphosphates as substrates. The chain is DNA-directed RNA polymerase subunit beta' from Methylobacterium sp. (strain 4-46).